A 160-amino-acid polypeptide reads, in one-letter code: Cyclic di-GMP-binding protein Smlt4090 (160 aa).

3',3'-c-di-GMP-binding residues include K33, K132, R134, D135, and D160.

It belongs to the YajQ family.

In terms of biological role, cyclic di-GMP effector that significantly contributes to virulence. Binds bis-(3',5')-cyclic diguanylate (cyclic di-GMP or c-di-GMP), an important bacterial second messenger that controls a wide range of cellular processes. This is Cyclic di-GMP-binding protein Smlt4090 from Stenotrophomonas maltophilia (strain K279a).